An 874-amino-acid polypeptide reads, in one-letter code: Bifunctional uridylyltransferase/uridylyl-removing enzyme (874 aa).

A uridylyltransferase region spans residues 1-336; that stretch reads MIDTSTITNP…DNGKTVETIQ (336 aa). Residues 337 to 695 form a uridylyl-removing region; the sequence is LSDDFQIRGH…LSKKATRGGT (359 aa). One can recognise an HD domain in the interval 455–577; that stretch reads VDEHSVRLIK…VRDEERLDYL (123 aa). ACT domains lie at 696–779 and 802–874; these read EVFV…RAPR and TMEL…TPQD.

Belongs to the GlnD family. Mg(2+) is required as a cofactor.

It carries out the reaction [protein-PII]-L-tyrosine + UTP = [protein-PII]-uridylyl-L-tyrosine + diphosphate. It catalyses the reaction [protein-PII]-uridylyl-L-tyrosine + H2O = [protein-PII]-L-tyrosine + UMP + H(+). With respect to regulation, uridylyltransferase (UTase) activity is inhibited by glutamine, while glutamine activates uridylyl-removing (UR) activity. Its function is as follows. Modifies, by uridylylation and deuridylylation, the PII regulatory proteins (GlnB and homologs), in response to the nitrogen status of the cell that GlnD senses through the glutamine level. Under low glutamine levels, catalyzes the conversion of the PII proteins and UTP to PII-UMP and PPi, while under higher glutamine levels, GlnD hydrolyzes PII-UMP to PII and UMP (deuridylylation). Thus, controls uridylylation state and activity of the PII proteins, and plays an important role in the regulation of nitrogen assimilation and metabolism. This Photobacterium profundum (strain SS9) protein is Bifunctional uridylyltransferase/uridylyl-removing enzyme.